Here is a 73-residue protein sequence, read N- to C-terminus: Large ribosomal subunit protein bL31 (73 aa).

The protein belongs to the bacterial ribosomal protein bL31 family. Type A subfamily. In terms of assembly, part of the 50S ribosomal subunit.

Functionally, binds the 23S rRNA. This is Large ribosomal subunit protein bL31 from Mesorhizobium japonicum (strain LMG 29417 / CECT 9101 / MAFF 303099) (Mesorhizobium loti (strain MAFF 303099)).